Consider the following 780-residue polypeptide: ATP-dependent 6-phosphofructokinase, liver type (780 aa).

Residue alanine 2 is modified to N-acetylalanine. An N-terminal catalytic PFK domain 1 region spans residues 2–390 (AAVDLEKLRA…NWNIYKLLAH (389 aa)). ATP-binding positions include glycine 25, 88–89 (RC), and 118–121 (GDGS). Aspartate 119 is a binding site for Mg(2+). Substrate is bound by residues 164–166 (SID), arginine 201, 208–210 (MGR), glutamate 264, arginine 292, and 298–301 (HVQR). The active-site Proton acceptor is the aspartate 166. Serine 377 is subject to Phosphoserine. Residues 391–400 (QKPPKEKSNF) form an interdomain linker region. The segment at 401–780 (SLAILNVGAP…RRTLSMDKGF (380 aa)) is C-terminal regulatory PFK domain 2. Beta-D-fructose 2,6-bisphosphate is bound by residues arginine 470, 527-531 (TISNN), arginine 565, 572-574 (MGG), and glutamate 628. O-linked (GlcNAc) serine glycosylation is present at serine 529. Position 640 is a phosphotyrosine (tyrosine 640). Beta-D-fructose 2,6-bisphosphate is bound by residues arginine 654, 660 to 663 (HLQQ), and arginine 734. Position 775 is a phosphoserine (serine 775).

The protein belongs to the phosphofructokinase type A (PFKA) family. ATP-dependent PFK group I subfamily. Eukaryotic two domain clade 'E' sub-subfamily. Homo- and heterotetramers. Phosphofructokinase (PFK) enzyme functions as a tetramer composed of different combinations of 3 types of subunits, called PFKM (M), PFKL (L) and PFKP (P). The composition of the PFK tetramer differs according to the tissue type it is present in. The kinetic and regulatory properties of the tetrameric enzyme are dependent on the subunit composition, hence can vary across tissues. The cofactor is Mg(2+). In terms of processing, glcNAcylation at Ser-529 by OGT decreases enzyme activity, leading to redirect glucose flux through the oxidative pentose phosphate pathway. Glycosylation is stimulated by both hypoxia and glucose deprivation.

Its subcellular location is the cytoplasm. It carries out the reaction beta-D-fructose 6-phosphate + ATP = beta-D-fructose 1,6-bisphosphate + ADP + H(+). Its pathway is carbohydrate degradation; glycolysis; D-glyceraldehyde 3-phosphate and glycerone phosphate from D-glucose: step 3/4. Its activity is regulated as follows. Allosterically activated by ADP, AMP, or fructose 2,6-bisphosphate, and allosterically inhibited by ATP or citrate. GlcNAcylation by OGT overcomes allosteric regulation. In terms of biological role, catalyzes the phosphorylation of D-fructose 6-phosphate to fructose 1,6-bisphosphate by ATP, the first committing step of glycolysis. Negatively regulates the phagocyte oxidative burst in response to bacterial infection by controlling cellular NADPH biosynthesis and NADPH oxidase-derived reactive oxygen species. Upon macrophage activation, drives the metabolic switch toward glycolysis, thus preventing glucose turnover that produces NADPH via pentose phosphate pathway. The polypeptide is ATP-dependent 6-phosphofructokinase, liver type (PFKL) (Pongo abelii (Sumatran orangutan)).